Reading from the N-terminus, the 583-residue chain is J protein JJJ2 (583 aa).

The J domain occupies 11-79; it reads RTTYYSILGL…KLRYDRDLKI (69 aa). Residues 215-224 show a composition bias toward polar residues; sequence SYSEDPNSCL. The disordered stretch occupies residues 215 to 313; the sequence is SYSEDPNSCL…SGSHDSNLQS (99 aa). Ser-229 bears the Phosphoserine mark. Residues 240–252 are compositionally biased toward low complexity; that stretch reads QQQQQQQQQQQQQ. Positions 262–281 are enriched in basic and acidic residues; the sequence is SPDEEKKNNKEPKRESRVSP. Positions 298–313 are enriched in polar residues; that stretch reads KTSTFSSGSHDSNLQS.

The protein resides in the cytoplasm. Its subcellular location is the nucleus. The chain is J protein JJJ2 (JJJ2) from Saccharomyces cerevisiae (strain ATCC 204508 / S288c) (Baker's yeast).